The sequence spans 312 residues: Beta-ketoacyl-[acyl-carrier-protein] synthase III 1 (312 aa).

Active-site residues include cysteine 113 and histidine 237. The interval 238-242 is ACP-binding; sequence QANIR. Asparagine 267 is an active-site residue.

This sequence belongs to the thiolase-like superfamily. FabH family. As to quaternary structure, homodimer.

It is found in the cytoplasm. The enzyme catalyses malonyl-[ACP] + acetyl-CoA + H(+) = 3-oxobutanoyl-[ACP] + CO2 + CoA. It participates in lipid metabolism; fatty acid biosynthesis. Functionally, catalyzes the condensation reaction of fatty acid synthesis by the addition to an acyl acceptor of two carbons from malonyl-ACP. Catalyzes the first condensation reaction which initiates fatty acid synthesis and may therefore play a role in governing the total rate of fatty acid production. Possesses both acetoacetyl-ACP synthase and acetyl transacylase activities. Its substrate specificity determines the biosynthesis of branched-chain and/or straight-chain of fatty acids. The chain is Beta-ketoacyl-[acyl-carrier-protein] synthase III 1 from Halalkalibacterium halodurans (strain ATCC BAA-125 / DSM 18197 / FERM 7344 / JCM 9153 / C-125) (Bacillus halodurans).